A 310-amino-acid chain; its full sequence is Olfactory receptor 10G2 (310 aa).

Residues 1-29 lie on the Extracellular side of the membrane; sequence MGKTKNTSLDAVVTDFILLGLSHPPNLRS. An N-linked (GlcNAc...) asparagine glycan is attached at Asn6. The chain crosses the membrane as a helical span at residues 30-50; the sequence is LLFLVFFIIYILTQLGNLLIL. Over 51–58 the chain is Cytoplasmic; that stretch reads LTMWADPK. A helical transmembrane segment spans residues 59–80; it reads LCARPMYILLGVLSFLDMWLSS. Topologically, residues 81–104 are extracellular; the sequence is VTVPLLILDFTPSIKAIPFGGCVA. Cys102 and Cys194 are joined by a disulfide. Residues 105–125 traverse the membrane as a helical segment; the sequence is QLYFFHFLGSTQCFLYTLMAY. Residues 126-144 lie on the Cytoplasmic side of the membrane; sequence DRYLAICQPLRYPVLMNGR. Residues 145 to 165 traverse the membrane as a helical segment; it reads LCTVLVAGAWVAGSMHGSIQA. Topologically, residues 166–202 are extracellular; it reads TLTFRLPYCGPNQVDYFICDIPAVLRLACADTTVNEL. The helical transmembrane segment at 203 to 222 threads the bilayer; that stretch reads VTFVDVGVVAASCFMLILLS. At 223–242 the chain is on the cytoplasmic side; sequence YANIVNAILKIRTTDGRRRA. Residues 243-263 form a helical membrane-spanning segment; it reads FSTCGSHLIVVTVYYVPCIFI. Residues 264–274 are Extracellular-facing; sequence YLRAGSKDPLD. The chain crosses the membrane as a helical span at residues 275 to 295; it reads GAAAVFYTVVTPLLNPLIYTL. The Cytoplasmic portion of the chain corresponds to 296 to 310; the sequence is RNQEVKSALKRITAG.

The protein belongs to the G-protein coupled receptor 1 family.

It localises to the cell membrane. Odorant receptor. This chain is Olfactory receptor 10G2 (OR10G2), found in Homo sapiens (Human).